We begin with the raw amino-acid sequence, 190 residues long: Protein GrpE (190 aa).

Positions 1–31 (MTEEQKKYEDAENLESKSENPEEASAEKSEN) are enriched in basic and acidic residues. The interval 1–39 (MTEEQKKYEDAENLESKSENPEEASAEKSENGVEDLQAE) is disordered.

It belongs to the GrpE family. In terms of assembly, homodimer.

It is found in the cytoplasm. Its function is as follows. Participates actively in the response to hyperosmotic and heat shock by preventing the aggregation of stress-denatured proteins, in association with DnaK and GrpE. It is the nucleotide exchange factor for DnaK and may function as a thermosensor. Unfolded proteins bind initially to DnaJ; upon interaction with the DnaJ-bound protein, DnaK hydrolyzes its bound ATP, resulting in the formation of a stable complex. GrpE releases ADP from DnaK; ATP binding to DnaK triggers the release of the substrate protein, thus completing the reaction cycle. Several rounds of ATP-dependent interactions between DnaJ, DnaK and GrpE are required for fully efficient folding. The sequence is that of Protein GrpE from Zymomonas mobilis subsp. mobilis (strain ATCC 31821 / ZM4 / CP4).